Consider the following 400-residue polypeptide: Enoyl-[acyl-carrier-protein] reductase [NADH] (400 aa).

NAD(+) contacts are provided by residues 48 to 53 (GSSSGY), 74 to 75 (FE), 111 to 112 (DA), and 139 to 140 (LA). Tyrosine 225 provides a ligand contact to substrate. Residue tyrosine 235 is the Proton donor of the active site. NAD(+) is bound by residues lysine 244 and 273-275 (VVT).

This sequence belongs to the TER reductase family. Monomer.

The catalysed reaction is a 2,3-saturated acyl-[ACP] + NAD(+) = a (2E)-enoyl-[ACP] + NADH + H(+). Its pathway is lipid metabolism; fatty acid biosynthesis. Functionally, involved in the final reduction of the elongation cycle of fatty acid synthesis (FAS II). Catalyzes the reduction of a carbon-carbon double bond in an enoyl moiety that is covalently linked to an acyl carrier protein (ACP). The protein is Enoyl-[acyl-carrier-protein] reductase [NADH] of Shewanella baltica (strain OS223).